Here is a 675-residue protein sequence, read N- to C-terminus: Zeaxanthin epoxidase, chloroplastic (675 aa).

The transit peptide at 1–25 (MASTVLYNSLTTSTTVFLRSHLPIS) directs the protein to the chloroplast. FAD is bound by residues 92-120 (RILV…KVFE) and 370-383 (KLTW…LLGD). Residues 558 to 622 (ICLSRKEDEP…HGTWITDNEG (65 aa)) form the FHA domain.

It depends on FAD as a cofactor.

Its subcellular location is the plastid. It localises to the chloroplast thylakoid membrane. The catalysed reaction is all-trans-zeaxanthin + 4 reduced [2Fe-2S]-[ferredoxin] + 2 O2 + 4 H(+) = all-trans-violaxanthin + 4 oxidized [2Fe-2S]-[ferredoxin] + 2 H2O. Its pathway is plant hormone biosynthesis; abscisate biosynthesis. Inhibited by diphenyleneiodonium (DPI). In terms of biological role, converts zeaxanthin into antheraxanthin and subsequently violaxanthin. Involved in the epoxidation of zeaxanthin. The chain is Zeaxanthin epoxidase, chloroplastic from Spinacia oleracea (Spinach).